An 809-amino-acid chain; its full sequence is Histone H2A deubiquitinase MYSM1 (809 aa).

The 46-residue stretch at 33–78 (GYEPNWMFDHGQEIYGRSWTSISQFVQTRTPLQVKNYARHFFKTKV) folds into the SANT domain. Disordered regions lie at residues 113–140 (PAQP…VTED) and 320–378 (DATD…KETY). 2 stretches are compositionally biased toward basic and acidic residues: residues 335 to 345 (TLDHPEDRSKP) and 363 to 378 (TDGR…KETY). The SWIRM domain maps to 410–508 (FKKPTEEVVL…FGCEEANRGE (99 aa)). An MPN domain is found at 592-719 (VKIHATALVT…YSSTRISPLS (128 aa)). Residues histidine 671, histidine 673, and aspartate 684 each contribute to the Zn(2+) site. Residues 671–684 (HSHPTFAPNPSVRD) carry the JAMM motif motif.

Belongs to the peptidase M67A family. MYSM1 subfamily.

It is found in the nucleus. Its function is as follows. Metalloprotease that specifically deubiquitinates monoubiquitinated histone H2A, a specific tag for epigenetic transcriptional repression, thereby acting as a coactivator. Preferentially deubiquitinates monoubiquitinated H2A in hyperacetylated nucleosomes. Deubiquitination of histone H2A leads to facilitate the phosphorylation and dissociation of histone H1 from the nucleosome. Acts as a coactivator by participating in the initiation and elongation steps of androgen receptor (AR)-induced gene activation. The chain is Histone H2A deubiquitinase MYSM1 (MYSM1) from Branchiostoma floridae (Florida lancelet).